The following is a 45-amino-acid chain: MTQIFLIGRLPEAYAPFDPIVDVLPIIPVLFLLLAFVWQASVSFR.

The propeptide occupies 1–8; that stretch reads MTQIFLIG. Residues 20-40 traverse the membrane as a helical segment; sequence IVDVLPIIPVLFLLLAFVWQA.

Belongs to the PsbK family. As to quaternary structure, PSII is composed of 1 copy each of membrane proteins PsbA, PsbB, PsbC, PsbD, PsbE, PsbF, PsbH, PsbI, PsbJ, PsbK, PsbL, PsbM, PsbT, PsbX, PsbY, PsbZ, Psb30/Ycf12, at least 3 peripheral proteins of the oxygen-evolving complex and a large number of cofactors. It forms dimeric complexes.

The protein localises to the plastid. Its subcellular location is the chloroplast thylakoid membrane. One of the components of the core complex of photosystem II (PSII). PSII is a light-driven water:plastoquinone oxidoreductase that uses light energy to abstract electrons from H(2)O, generating O(2) and a proton gradient subsequently used for ATP formation. It consists of a core antenna complex that captures photons, and an electron transfer chain that converts photonic excitation into a charge separation. This Ostreococcus tauri protein is Photosystem II reaction center protein K.